Reading from the N-terminus, the 514-residue chain is Probable drug/proton antiporter YHK8 (514 aa).

Topologically, residues 1 to 74 (MVAEFQIASA…RHMSTARRYY (74 aa)) are cytoplasmic. The chain crosses the membrane as a helical span at residues 75–95 (ISSLITFTSMVITMISSSWTL). The Extracellular portion of the chain corresponds to 96-111 (PSTHIIEHFHISHEVS). Residues 112-132 (TLGITLYVFGLGIGPLFLSPL) traverse the membrane as a helical segment. Residues 133–141 (SELYGRRIT) are Cytoplasmic-facing. A helical membrane pass occupies residues 142-162 (FLYALTLSIIWQCLTIWSKTI). Residues 163 to 170 (TGVMFGRF) lie on the Extracellular side of the membrane. Residues 171–191 (LSGFFGSAFLSVAGGAIADIF) traverse the membrane as a helical segment. The Cytoplasmic portion of the chain corresponds to 192 to 200 (DKDQIGIPM). Residues 201 to 221 (AIYTTSAFLGPSLGPIIGGAL) traverse the membrane as a helical segment. Residues 222–227 (YHQSYK) lie on the Extracellular side of the membrane. The chain crosses the membrane as a helical span at residues 228-248 (WTFITLLITSGCCLVMIIFTI). Residues 249–307 (PETYKPMLLIRKAKRLRKEKNDQRYYAVLEVTREQTSLLSAIFLSTKRPFGLLLRDRMM) are Cytoplasmic-facing. The helical transmembrane segment at 308–328 (GVLCFYTGLELAIIYLYFVAF) threads the bilayer. The Extracellular segment spans residues 329 to 342 (PYVFKKLYNFGPME). Residues 343-363 (IACSYIGIMVGMILSAPTCLL) form a helical membrane-spanning segment. Residues 364–386 (FQKTFEWRVKRNNGVKTPEMRFE) are Cytoplasmic-facing. Residues 387-407 (PLFYGAFLTPVGLFIFAFTCY) traverse the membrane as a helical segment. Residues 408–412 (KHVHW) lie on the Extracellular side of the membrane. A helical membrane pass occupies residues 413–433 (IAPIIGSAIFGSGVYFVFTGV). The Cytoplasmic segment spans residues 434 to 447 (FAYTVDAYRRYAAS). The chain crosses the membrane as a helical span at residues 448–468 (GMACNTFVRCIMAGVFPLFGL). Topologically, residues 469-477 (QMYKSMGVN) are extracellular. The chain crosses the membrane as a helical span at residues 478-498 (WAGFLLAMVTVAMIPVPFLFT). Residues 499-514 (KYGARLRAKSPYAWDD) are Cytoplasmic-facing.

This sequence belongs to the major facilitator superfamily. CAR1 family.

The protein resides in the membrane. Probable drug/proton antiporter. The sequence is that of Probable drug/proton antiporter YHK8 (YHK8) from Saccharomyces cerevisiae (strain ATCC 204508 / S288c) (Baker's yeast).